Here is a 168-residue protein sequence, read N- to C-terminus: Chorismate pyruvate-lyase (168 aa).

Substrate contacts are provided by methionine 36, arginine 78, leucine 116, and glutamate 157.

This sequence belongs to the UbiC family. As to quaternary structure, monomer.

The protein localises to the cytoplasm. The enzyme catalyses chorismate = 4-hydroxybenzoate + pyruvate. The protein operates within cofactor biosynthesis; ubiquinone biosynthesis. In terms of biological role, removes the pyruvyl group from chorismate, with concomitant aromatization of the ring, to provide 4-hydroxybenzoate (4HB) for the ubiquinone pathway. This Yersinia enterocolitica serotype O:8 / biotype 1B (strain NCTC 13174 / 8081) protein is Chorismate pyruvate-lyase.